The sequence spans 444 residues: 23S rRNA (uracil(1939)-C(5))-methyltransferase RlmD (444 aa).

The TRAM domain maps to 5–67 (RNRFDRTPFQ…RHFDEAKTVE (63 aa)). 4 residues coordinate [4Fe-4S] cluster: Cys-80, Cys-86, Cys-89, and Cys-168. Positions 276, 305, 310, 326, 353, and 374 each coordinate S-adenosyl-L-methionine. Cys-400 (nucleophile) is an active-site residue.

It belongs to the class I-like SAM-binding methyltransferase superfamily. RNA M5U methyltransferase family. RlmD subfamily.

The catalysed reaction is uridine(1939) in 23S rRNA + S-adenosyl-L-methionine = 5-methyluridine(1939) in 23S rRNA + S-adenosyl-L-homocysteine + H(+). In terms of biological role, catalyzes the formation of 5-methyl-uridine at position 1939 (m5U1939) in 23S rRNA. This chain is 23S rRNA (uracil(1939)-C(5))-methyltransferase RlmD, found in Xanthomonas campestris pv. campestris (strain 8004).